Reading from the N-terminus, the 256-residue chain is Small ribosomal subunit protein eS1 (256 aa).

Ala-2 is modified (N-acetylalanine; partial).

This sequence belongs to the eukaryotic ribosomal protein eS1 family. As to quaternary structure, component of the small ribosomal subunit. Mature ribosomes consist of a small (40S) and a large (60S) subunit. The 40S subunit contains about 33 different proteins and 1 molecule of RNA (18S). The 60S subunit contains about 49 different proteins and 3 molecules of RNA (25S, 5.8S and 5S).

The protein resides in the cytoplasm. In Coprinopsis cinerea (strain Okayama-7 / 130 / ATCC MYA-4618 / FGSC 9003) (Inky cap fungus), this protein is Small ribosomal subunit protein eS1.